Here is a 287-residue protein sequence, read N- to C-terminus: Chlorophyll a-b binding protein CP29.2, chloroplastic (287 aa).

Residues 1–31 constitute a chloroplast transit peptide; that stretch reads MAATSTAAAASSIMGTRVVSDISSNSSRFTA. At arginine 32 the chain carries N2-acetylarginine. Threonine 37 carries the phosphothreonine modification. Tryptophan 55 lines the chlorophyll b pocket. Phenylalanine 75 provides a ligand contact to chlorophyll a. Phosphothreonine occurs at positions 109 and 111. Residues glutamate 137 and histidine 140 each contribute to the chlorophyll a site. A helical membrane pass occupies residues 143 to 163; sequence WAMLATLGAITVEWLTGVTWQ. A chlorophyll a-binding site is contributed by leucine 177. Residues 181 to 201 form a helical membrane-spanning segment; that stretch reads LPFSISTLIWIEVLVIGYIEF. Chlorophyll b is bound by residues glutamate 200 and arginine 203. 5 residues coordinate chlorophyll a: glutamate 239, histidine 242, arginine 244, glutamine 256, and histidine 271. A helical transmembrane segment spans residues 245-265; it reads LAMVGFLGFAVQAAATGKGPL.

Belongs to the light-harvesting chlorophyll a/b-binding (LHC) protein family. As to quaternary structure, the LHC complex consists of chlorophyll a-b binding proteins. The cofactor is Binds at least 14 chlorophylls (8 Chl-a and 6 Chl-b) and carotenoids such as lutein and neoxanthin.. Post-translationally, photoregulated by reversible phosphorylation of its threonine residues.

It is found in the plastid. Its subcellular location is the chloroplast thylakoid membrane. In terms of biological role, the light-harvesting complex (LHC) functions as a light receptor, it captures and delivers excitation energy to photosystems with which it is closely associated. In Arabidopsis thaliana (Mouse-ear cress), this protein is Chlorophyll a-b binding protein CP29.2, chloroplastic (LHCB4.2).